The following is a 237-amino-acid chain: 2,3-bisphosphoglycerate-dependent phosphoglycerate mutase (237 aa).

Residues 8–15 (RHGQSQWN), 21–22 (TG), Arg60, 87–90 (ERHY), Lys98, 114–115 (RR), and 180–181 (GN) contribute to the substrate site. His9 (tele-phosphohistidine intermediate) is an active-site residue. Glu87 acts as the Proton donor/acceptor in catalysis.

The protein belongs to the phosphoglycerate mutase family. BPG-dependent PGAM subfamily. In terms of assembly, homodimer.

It carries out the reaction (2R)-2-phosphoglycerate = (2R)-3-phosphoglycerate. Its pathway is carbohydrate degradation; glycolysis; pyruvate from D-glyceraldehyde 3-phosphate: step 3/5. Its function is as follows. Catalyzes the interconversion of 2-phosphoglycerate and 3-phosphoglycerate. This is 2,3-bisphosphoglycerate-dependent phosphoglycerate mutase from Caulobacter sp. (strain K31).